A 114-amino-acid chain; its full sequence is Cell cycle protein GpsB (114 aa).

The stretch at 42–77 (YQKMADMNNEVVKLSEENHKLKKELEELRLRVATSR) forms a coiled coil. Positions 74–99 (ATSRPQDNKSFSSNNTTTNTSSNNVD) are disordered. Positions 85–97 (SSNNTTTNTSSNN) are enriched in low complexity.

It belongs to the GpsB family. In terms of assembly, forms polymers through the coiled coil domains. Interacts with PBP1, MreC and EzrA.

The protein resides in the cytoplasm. Divisome component that associates with the complex late in its assembly, after the Z-ring is formed, and is dependent on DivIC and PBP2B for its recruitment to the divisome. Together with EzrA, is a key component of the system that regulates PBP1 localization during cell cycle progression. Its main role could be the removal of PBP1 from the cell pole after pole maturation is completed. Also contributes to the recruitment of PBP1 to the division complex. Not essential for septum formation. The sequence is that of Cell cycle protein GpsB from Staphylococcus aureus (strain Mu3 / ATCC 700698).